Consider the following 206-residue polypeptide: Pyridoxine/pyridoxamine 5'-phosphate oxidase (206 aa).

Residues 53–58 (RMVLLK), 68–69 (YT), Lys75, and Gln97 contribute to the FMN site. A substrate-binding site is contributed by Lys58. The substrate site is built by Tyr115, Arg119, and Ser123. FMN contacts are provided by residues 132 to 133 (QS) and Trp177. 183-185 (RLH) contacts substrate. Arg187 serves as a coordination point for FMN.

This sequence belongs to the pyridoxamine 5'-phosphate oxidase family. In terms of assembly, homodimer. Requires FMN as cofactor.

It catalyses the reaction pyridoxamine 5'-phosphate + O2 + H2O = pyridoxal 5'-phosphate + H2O2 + NH4(+). It carries out the reaction pyridoxine 5'-phosphate + O2 = pyridoxal 5'-phosphate + H2O2. Its pathway is cofactor metabolism; pyridoxal 5'-phosphate salvage; pyridoxal 5'-phosphate from pyridoxamine 5'-phosphate: step 1/1. The protein operates within cofactor metabolism; pyridoxal 5'-phosphate salvage; pyridoxal 5'-phosphate from pyridoxine 5'-phosphate: step 1/1. Its function is as follows. Catalyzes the oxidation of either pyridoxine 5'-phosphate (PNP) or pyridoxamine 5'-phosphate (PMP) into pyridoxal 5'-phosphate (PLP). This chain is Pyridoxine/pyridoxamine 5'-phosphate oxidase, found in Rhizobium etli (strain CIAT 652).